Consider the following 82-residue polypeptide: Conotoxin Cal30 (82 aa).

An N-terminal signal peptide occupies residues methionine 1 to serine 19.

May contain 5 disulfide bonds. Expressed by the venom duct.

The protein localises to the secreted. Its function is as follows. Probable neurotoxin. This is Conotoxin Cal30 from Californiconus californicus (California cone).